We begin with the raw amino-acid sequence, 151 residues long: Transcriptional regulator MraZ (151 aa).

SpoVT-AbrB domains are found at residues 5-51 and 81-124; these read AHEL…PVAE and AEIL…GREQ.

The protein belongs to the MraZ family. As to quaternary structure, forms oligomers.

It is found in the cytoplasm. It localises to the nucleoid. This is Transcriptional regulator MraZ from Neisseria meningitidis serogroup C / serotype 2a (strain ATCC 700532 / DSM 15464 / FAM18).